A 437-amino-acid chain; its full sequence is mRNA cleavage and polyadenylation factor CLP1 (437 aa).

ATP contacts are provided by residues Glu-23 and 122-127 (STGKSS).

It belongs to the Clp1 family. Clp1 subfamily. As to quaternary structure, component of a pre-mRNA cleavage factor complex. Interacts directly with PCF11.

Its subcellular location is the nucleus. Its function is as follows. Required for endonucleolytic cleavage during polyadenylation-dependent pre-mRNA 3'-end formation. This chain is mRNA cleavage and polyadenylation factor CLP1, found in Kluyveromyces lactis (strain ATCC 8585 / CBS 2359 / DSM 70799 / NBRC 1267 / NRRL Y-1140 / WM37) (Yeast).